Consider the following 361-residue polypeptide: Dihydroorotate dehydrogenase (quinone) (361 aa).

FMN is bound by residues alanine 67–lysine 71 and threonine 91. Position 71 (lysine 71) interacts with substrate. Substrate is bound at residue asparagine 116 to phenylalanine 120. FMN-binding residues include asparagine 145 and asparagine 178. Asparagine 178 contacts substrate. The active-site Nucleophile is the serine 181. Substrate is bound at residue asparagine 183. FMN contacts are provided by lysine 223 and glycine 251. A substrate-binding site is contributed by asparagine 252 to threonine 253. FMN-binding positions include glycine 273, glycine 302, and tyrosine 323 to threonine 324.

This sequence belongs to the dihydroorotate dehydrogenase family. Type 2 subfamily. In terms of assembly, monomer. The cofactor is FMN.

The protein localises to the cell membrane. The enzyme catalyses (S)-dihydroorotate + a quinone = orotate + a quinol. The protein operates within pyrimidine metabolism; UMP biosynthesis via de novo pathway; orotate from (S)-dihydroorotate (quinone route): step 1/1. Its function is as follows. Catalyzes the conversion of dihydroorotate to orotate with quinone as electron acceptor. The polypeptide is Dihydroorotate dehydrogenase (quinone) (Deinococcus geothermalis (strain DSM 11300 / CIP 105573 / AG-3a)).